The sequence spans 300 residues: Acetylglutamate kinase (300 aa).

Substrate-binding positions include 69–70 (GG), Arg-91, and Asn-197.

It belongs to the acetylglutamate kinase family. ArgB subfamily.

The protein resides in the cytoplasm. It catalyses the reaction N-acetyl-L-glutamate + ATP = N-acetyl-L-glutamyl 5-phosphate + ADP. Its pathway is amino-acid biosynthesis; L-arginine biosynthesis; N(2)-acetyl-L-ornithine from L-glutamate: step 2/4. In terms of biological role, catalyzes the ATP-dependent phosphorylation of N-acetyl-L-glutamate. This is Acetylglutamate kinase from Kineococcus radiotolerans (strain ATCC BAA-149 / DSM 14245 / SRS30216).